Reading from the N-terminus, the 85-residue chain is MERGNRKSRIGVVVSNKMTKTVVVKVERRVADPKYGKIVTKAEKYKAHDEDQACQIGDRVRIVETRPISKDKRWRVAETIEKAEA.

This sequence belongs to the universal ribosomal protein uS17 family. In terms of assembly, part of the 30S ribosomal subunit.

In terms of biological role, one of the primary rRNA binding proteins, it binds specifically to the 5'-end of 16S ribosomal RNA. The sequence is that of Small ribosomal subunit protein uS17 from Anaeromyxobacter dehalogenans (strain 2CP-1 / ATCC BAA-258).